Consider the following 98-residue polypeptide: MSKERLLKVLLAPHVSEKSALLADASEQYIFKVVPNATKPEVKQAVESLFDVKVQSVNMINIKGKTKVFKGRVGKRNGLRKAIVRLAPGQEIDFVGAE.

It belongs to the universal ribosomal protein uL23 family. Part of the 50S ribosomal subunit. Contacts protein L29, and trigger factor when it is bound to the ribosome.

In terms of biological role, one of the early assembly proteins it binds 23S rRNA. One of the proteins that surrounds the polypeptide exit tunnel on the outside of the ribosome. Forms the main docking site for trigger factor binding to the ribosome. The sequence is that of Large ribosomal subunit protein uL23 from Hydrogenovibrio crunogenus (strain DSM 25203 / XCL-2) (Thiomicrospira crunogena).